The primary structure comprises 146 residues: Catabolic 3-dehydroquinase (146 aa).

The active-site Proton acceptor is the Tyr-24. 3 residues coordinate substrate: Asn-78, His-84, and Asp-91. His-104 (proton donor) is an active-site residue. Substrate is bound by residues 105–106 (IT) and Arg-115.

It belongs to the type-II 3-dehydroquinase family. Homododecamer. Adopts a ring-like structure, composed of an arrangement of two hexameric rings stacked on top of one another.

The catalysed reaction is 3-dehydroquinate = 3-dehydroshikimate + H2O. The protein operates within aromatic compound metabolism; 3,4-dihydroxybenzoate biosynthesis; 3,4-dihydroxybenzoate from 3-dehydroquinate: step 1/2. Functionally, is involved in the catabolism of quinate. Allows the utilization of quinate as carbon source via the beta-ketoadipate pathway. In Meyerozyma guilliermondii (strain ATCC 6260 / CBS 566 / DSM 6381 / JCM 1539 / NBRC 10279 / NRRL Y-324) (Yeast), this protein is Catabolic 3-dehydroquinase.